The sequence spans 691 residues: Elongation factor G (691 aa).

The tr-type G domain maps to 8 to 282 (EQTRNIGIMA…AVIDYLPAPT (275 aa)). GTP is bound by residues 17–24 (AHIDAGKT), 81–85 (DTPGH), and 135–138 (NKMD).

Belongs to the TRAFAC class translation factor GTPase superfamily. Classic translation factor GTPase family. EF-G/EF-2 subfamily.

Its subcellular location is the cytoplasm. In terms of biological role, catalyzes the GTP-dependent ribosomal translocation step during translation elongation. During this step, the ribosome changes from the pre-translocational (PRE) to the post-translocational (POST) state as the newly formed A-site-bound peptidyl-tRNA and P-site-bound deacylated tRNA move to the P and E sites, respectively. Catalyzes the coordinated movement of the two tRNA molecules, the mRNA and conformational changes in the ribosome. The protein is Elongation factor G of Natranaerobius thermophilus (strain ATCC BAA-1301 / DSM 18059 / JW/NM-WN-LF).